The chain runs to 57 residues: Kunitz-type serine protease inhibitor 2 (57 aa).

Positions 5–55 (CELPAETGLCKARIRSFHYNRAAQQCLEFIYGGCGGNANRFKTIDECHRTC) constitute a BPTI/Kunitz inhibitor domain. 3 disulfides stabilise this stretch: cysteine 5-cysteine 55, cysteine 14-cysteine 38, and cysteine 30-cysteine 51.

The protein belongs to the venom Kunitz-type family. Expressed by the venom gland.

The protein localises to the secreted. Its function is as follows. Serine protease inhibitor. This Naja nivea (Cape cobra) protein is Kunitz-type serine protease inhibitor 2.